The primary structure comprises 1066 residues: Thyrotropin-releasing hormone-degrading ectoenzyme (1066 aa).

Basic and acidic residues predominate over residues 1-14; sequence MALDGERGEQEEEK. Positions 1–43 are disordered; it reads MALDGERGEQEEEKKKKKKKKKRKKKEEEGAEKSSSPFAATMG. Residues 1 to 81 are Cytoplasmic-facing; it reads MALDGERGEQ…ERHIAVHKRL (81 aa). The span at 15 to 25 shows a compositional bias: basic residues; that stretch reads KKKKKKKKRKK. Thr71 carries the post-translational modification Phosphothreonine; by PKC. Residues 82–102 form a helical; Signal-anchor for type II membrane protein membrane-spanning segment; it reads VLAFAVSIVALLAVTMLAVLL. Over 103 to 1066 the chain is Extracellular; that stretch reads SLRFDECGAS…FQWLGKAMRH (964 aa). A disordered region spans residues 117–177; the sequence is GTDGGLGGFP…SEEEQEQWQP (61 aa). Residues 118–127 show a composition bias toward gly residues; that stretch reads TDGGLGGFPE. A glycan (N-linked (GlcNAc...) asparagine) is linked at Asn131. Over residues 143–154 the composition is skewed to basic and acidic residues; sequence HAGEESSQREIG. N-linked (GlcNAc...) asparagine glycosylation is found at Asn202, Asn217, Asn264, and Asn380. Residue 446–450 participates in substrate binding; that stretch reads AAMEN. His482 lines the Zn(2+) pocket. Catalysis depends on Glu483, which acts as the Proton acceptor. Residues His486 and Glu505 each contribute to the Zn(2+) site. N-linked (GlcNAc...) asparagine glycosylation is found at Asn647, Asn676, Asn691, Asn705, Asn726, Asn842, and Asn948.

It belongs to the peptidase M1 family. Homodimer; disulfide-linked. Zn(2+) serves as cofactor. As to expression, predominantly expressed in brain and pituitary. Lower levels in lung and liver.

It is found in the membrane. It carries out the reaction Release of the N-terminal pyroglutamyl group from pGlu-|-His-Xaa tripeptides and pGlu-|-His-Xaa-Gly tetrapeptides.. Its function is as follows. Specific inactivation of TRH after its release. The sequence is that of Thyrotropin-releasing hormone-degrading ectoenzyme (Trhde) from Rattus norvegicus (Rat).